Reading from the N-terminus, the 342-residue chain is Subtilisin-like serine protease Rho m 2.0101 (342 aa).

The propeptide at 1–30 (TMELLEDLIEQVRQLPMVNFIEKNSLVHAN) is removed in mature form. Residues 1-30 (TMELLEDLIEQVRQLPMVNFIEKNSLVHAN) form the Inhibitor I9 domain. The Peptidase S8 domain occupies 39 to 342 (PWGLARISHR…GQNLTKFWGH (304 aa)). Residues aspartate 75 and histidine 107 each act as charge relay system in the active site. 2 N-linked (GlcNAc...) asparagine glycosylation sites follow: asparagine 137 and asparagine 171. Serine 267 acts as the Charge relay system in catalysis. N-linked (GlcNAc...) asparagine glycosylation is present at asparagine 335.

The protein belongs to the peptidase S8 family.

Functionally, serine protease. The sequence is that of Subtilisin-like serine protease Rho m 2.0101 from Rhodotorula mucilaginosa (Yeast).